The following is a 252-amino-acid chain: Major prion protein (252 aa).

An N-terminal signal peptide occupies residues 1–28 (MAHLGYWMLLLFVATWSDVGLCKKRPKP). An interaction with GRB2, ERI3 and SYN1 region spans residues 23 to 229 (KKRPKPGGGW…ESQAAYQRAA (207 aa)). Residues 26 to 109 (PKPGGGWNTG…KPSKPKTSMK (84 aa)) are disordered. Repeat copies occupy residues 51 to 59 (PPQGGGWGQ), 60 to 67 (PHGGGWGQ), 68 to 75 (PHGGGWGQ), 76 to 83 (PHGGGWGQ), and 84 to 92 (PHGGGWGQG). A 5 X 8 AA tandem repeats of P-H-G-G-G-W-G-Q region spans residues 51-92 (PPQGGGWGQPHGGGWGQPHGGGWGQPHGGGWGQPHGGGWGQG). Residues 53 to 93 (QGGGWGQPHGGGWGQPHGGGWGQPHGGGWGQPHGGGWGQGG) are compositionally biased toward gly residues. His61, Gly62, Gly63, His69, Gly70, Gly71, His77, Gly78, Gly79, His85, Gly86, and Gly87 together coordinate Cu(2+). Cys178 and Cys213 are joined by a disulfide. Asn180 and Asn196 each carry an N-linked (GlcNAc...) asparagine glycan. A lipid anchor (GPI-anchor amidated alanine) is attached at Ala229. Residues 230-252 (GVLLFSSPPVILLISFLIFLIVG) constitute a propeptide, removed in mature form.

Belongs to the prion family. Monomer and homodimer. Has a tendency to aggregate into amyloid fibrils containing a cross-beta spine, formed by a steric zipper of superposed beta-strands. Soluble oligomers may represent an intermediate stage on the path to fibril formation. Copper binding may promote oligomerization. Interacts with GRB2, APP, ERI3/PRNPIP and SYN1. Mislocalized cytosolically exposed PrP interacts with MGRN1; this interaction alters MGRN1 subcellular location and causes lysosomal enlargement. Interacts with KIAA1191.

Its subcellular location is the cell membrane. The protein localises to the golgi apparatus. Its primary physiological function is unclear. Has cytoprotective activity against internal or environmental stresses. May play a role in neuronal development and synaptic plasticity. May be required for neuronal myelin sheath maintenance. May play a role in iron uptake and iron homeostasis. Soluble oligomers are toxic to cultured neuroblastoma cells and induce apoptosis (in vitro). Association with GPC1 (via its heparan sulfate chains) targets PRNP to lipid rafts. Also provides Cu(2+) or Zn(2+) for the ascorbate-mediated GPC1 deaminase degradation of its heparan sulfate side chains. The polypeptide is Major prion protein (PRNP) (Oryctolagus cuniculus (Rabbit)).